The primary structure comprises 980 residues: Putative helicase 087L (980 aa).

The region spanning 59–246 (INPHTLYDGV…IDLFNLILRT (188 aa)) is the Helicase ATP-binding domain. 72–79 (HEMGTGKT) serves as a coordination point for ATP. The DEAH box signature appears at 189–192 (DEAH). The Helicase C-terminal domain maps to 389–546 (RLSFVFSEFV…SIDLHMYEIA (158 aa)).

Belongs to the IIV-6 022L family. SNF2/RAD54 helicase subfamily.

In Invertebrate iridescent virus 3 (IIV-3), this protein is Putative helicase 087L.